The primary structure comprises 709 residues: D-(-)-3-hydroxybutyrate oligomer hydrolase (709 aa).

The signal sequence occupies residues 1–26; it reads MTVFKTAPLLIAALAASSCGGGGSGA. A disordered region spans residues 58 to 77; it reads GLGRSGLQDDSPPGYAGSQP. Catalysis depends on Ser305, which acts as the Charge relay system.

The protein belongs to the D-(-)-3-hydroxybutyrate oligomer hydrolase family.

The protein resides in the secreted. The catalysed reaction is (3R)-hydroxybutanoate dimer + H2O = 2 (R)-3-hydroxybutanoate + H(+). Its pathway is lipid metabolism; butanoate metabolism. Participates in the degradation of poly-3-hydroxybutyrate (PHB). It works downstream of poly(3-hydroxybutyrate) depolymerase, hydrolyzing D(-)-3-hydroxybutyrate oligomers of various length (3HB-oligomers) into 3HB-monomers. The polypeptide is D-(-)-3-hydroxybutyrate oligomer hydrolase (Paracidovorax citrulli (strain AAC00-1) (Acidovorax citrulli)).